The sequence spans 649 residues: Pesticidal crystal protein Cry3Ca (649 aa).

Positions 1–13 (MNPNNRSEHDTIK) are enriched in basic and acidic residues. The tract at residues 1–29 (MNPNNRSEHDTIKATENNEVSNNHAQYPL) is disordered. The segment covering 14-25 (ATENNEVSNNHA) has biased composition (polar residues).

It belongs to the delta endotoxin family.

In terms of biological role, promotes colloidosmotic lysis by binding to the midgut epithelial cells of Coleoptera. The polypeptide is Pesticidal crystal protein Cry3Ca (cry3Ca) (Bacillus thuringiensis subsp. kurstaki).